The sequence spans 268 residues: Glucosamine-6-phosphate deaminase (268 aa).

The active-site Proton acceptor; for enolization step is the D72. The active-site For ring-opening step is D141. The active-site Proton acceptor; for ring-opening step is H143. E148 functions as the For ring-opening step in the catalytic mechanism.

Belongs to the glucosamine/galactosamine-6-phosphate isomerase family. NagB subfamily.

The enzyme catalyses alpha-D-glucosamine 6-phosphate + H2O = beta-D-fructose 6-phosphate + NH4(+). It functions in the pathway amino-sugar metabolism; N-acetylneuraminate degradation; D-fructose 6-phosphate from N-acetylneuraminate: step 5/5. Its activity is regulated as follows. Allosterically activated by N-acetylglucosamine 6-phosphate (GlcNAc6P). Functionally, catalyzes the reversible isomerization-deamination of glucosamine 6-phosphate (GlcN6P) to form fructose 6-phosphate (Fru6P) and ammonium ion. The sequence is that of Glucosamine-6-phosphate deaminase from Borrelia garinii subsp. bavariensis (strain ATCC BAA-2496 / DSM 23469 / PBi) (Borreliella bavariensis).